The sequence spans 607 residues: COMPASS component cclA (607 aa).

Low complexity predominate over residues 1 to 19 (MASTHAAGSPAPSSSINSP). Disordered stretches follow at residues 1-22 (MASTHAAGSPAPSSSINSPILH) and 34-86 (GEGS…KSVA). A compositionally biased stretch (basic residues) spans 57 to 69 (SKRNKRDSRKKRE). One can recognise a B30.2/SPRY domain in the interval 157–376 (IADTDFPHIK…YAFNLKETPA (220 aa)). The tract at residues 587-607 (NTPITDVPVPPEPEDTPMTGG) is disordered.

The protein belongs to the cclA family. Component of the COMPASS complex.

Its subcellular location is the nucleus. It is found in the chromosome. The protein resides in the telomere. Component of the COMPASS (Set1C) complex that specifically mono-, di- and trimethylates histone H3 to form H3K4me1/2/3, which subsequently plays a role in telomere length maintenance and transcription elongation regulation. Controls the production of several secondary metabolites, including monodictyphenone, emodin and emodin derivatives, as well as two anti-osteoporosis polyketides, F9775A and F9775B. The polypeptide is COMPASS component cclA (Emericella nidulans (strain FGSC A4 / ATCC 38163 / CBS 112.46 / NRRL 194 / M139) (Aspergillus nidulans)).